The chain runs to 968 residues: RNA polymerase-associated protein RapA (968 aa).

The Helicase ATP-binding domain maps to 164 to 334; that stretch reads DVGRRHAPRV…FARLRLLDPN (171 aa). Residue 177–184 participates in ATP binding; it reads DEVGLGKT. A DEAH box motif is present at residues 280 to 283; sequence DEAH. Residues 490–685 enclose the Helicase C-terminal domain; that stretch reads RVEWLMGYLT…ALKAQLEQGR (196 aa).

The protein belongs to the SNF2/RAD54 helicase family. RapA subfamily. As to quaternary structure, interacts with the RNAP. Has a higher affinity for the core RNAP than for the holoenzyme. Its ATPase activity is stimulated by binding to RNAP.

In terms of biological role, transcription regulator that activates transcription by stimulating RNA polymerase (RNAP) recycling in case of stress conditions such as supercoiled DNA or high salt concentrations. Probably acts by releasing the RNAP, when it is trapped or immobilized on tightly supercoiled DNA. Does not activate transcription on linear DNA. Probably not involved in DNA repair. This Salmonella choleraesuis (strain SC-B67) protein is RNA polymerase-associated protein RapA.